A 397-amino-acid chain; its full sequence is Probable protein phosphatase 2C 74 (397 aa).

The 259-residue stretch at 133 to 391 (GFWVASRRGL…DDVTVMVVDL (259 aa)) folds into the PPM-type phosphatase domain. Positions 170, 171, 343, and 382 each coordinate Mn(2+).

It belongs to the PP2C family. It depends on Mg(2+) as a cofactor. Mn(2+) serves as cofactor.

It carries out the reaction O-phospho-L-seryl-[protein] + H2O = L-seryl-[protein] + phosphate. It catalyses the reaction O-phospho-L-threonyl-[protein] + H2O = L-threonyl-[protein] + phosphate. The sequence is that of Probable protein phosphatase 2C 74 from Oryza sativa subsp. japonica (Rice).